Here is a 196-residue protein sequence, read N- to C-terminus: Large ribosomal subunit protein uL10 (196 aa).

The interval 169 to 196 (KAAECPAEAPQPAAETPAEAPEAPADAE) is disordered. The segment covering 172–196 (ECPAEAPQPAAETPAEAPEAPADAE) has biased composition (low complexity).

Belongs to the universal ribosomal protein uL10 family. Part of the ribosomal stalk of the 50S ribosomal subunit. The N-terminus interacts with L11 and the large rRNA to form the base of the stalk. The C-terminus forms an elongated spine to which L12 dimers bind in a sequential fashion forming a multimeric L10(L12)X complex.

Functionally, forms part of the ribosomal stalk, playing a central role in the interaction of the ribosome with GTP-bound translation factors. The chain is Large ribosomal subunit protein uL10 from Mycobacterium avium (strain 104).